The chain runs to 172 residues: Translation initiation factor IF-3 (172 aa).

The protein belongs to the IF-3 family. As to quaternary structure, monomer.

The protein resides in the cytoplasm. In terms of biological role, IF-3 binds to the 30S ribosomal subunit and shifts the equilibrium between 70S ribosomes and their 50S and 30S subunits in favor of the free subunits, thus enhancing the availability of 30S subunits on which protein synthesis initiation begins. The protein is Translation initiation factor IF-3 of Lactobacillus johnsonii (strain CNCM I-12250 / La1 / NCC 533).